A 254-amino-acid chain; its full sequence is Short-chain dehydrogenase srdF (254 aa).

Residues Ile18, Ser37, Glu67, Asn95, Tyr167, Lys171, Val199, and Thr201 each contribute to the NADP(+) site. The Proton donor role is filled by Tyr167. Lys171 serves as the catalytic Lowers pKa of active site Tyr.

The protein belongs to the short-chain dehydrogenases/reductases (SDR) family.

In terms of biological role, short-chain dehydrogenase; part of the gene cluster that mediates the biosynthesis of sordarial, a salicylic aldehyde structurally related to the phytotoxin pyriculol. The most interesting aspect of this pathway is formation of an aromatic product from the highly reducing polyketide synthase srdA. SrdA synthesizes a reduced polyketide chain from one molecule of acetyl-CoA and five molecules of malonyl-CoA. The polyketide chain is then reductively released as an aldehyde. The oxidoreductases srdC, srdD and srdE then oxidize one of the hydroxy groups to facilitate the intramolecular aldol condensation, followed by dehydration to yield a salicylic aldehyde. This aldehyde can undergo facile reduction by endogenous reductases to yield the alcohol 1-hydroxy-2-hydroxymethyl-3-pent-1,3-dienylbenzene. The flavin-dependent srdI counteract against the propensity of the aldehydes to be reduced under physiological conditions and is responsible for reoxidizing 1-hydroxy-2-hydroxymethyl-3-pent-1,3-dienylbenzene back to the salicylic aldehyde. This salicylic aldehyde is then selectively epoxidized by the cupin-domain-containing oxidoreductase srdB to yield the epoxide, which can be hydrolyzed stereoselectively by the hydrolase srdG to give the final product sordarial. The chain is Short-chain dehydrogenase srdF from Neurospora crassa (strain ATCC 24698 / 74-OR23-1A / CBS 708.71 / DSM 1257 / FGSC 987).